The primary structure comprises 117 residues: Putative small ubiquitin-related modifier 6 (117 aa).

The segment at 1-30 (MSTKSSSIHGRNEVKMEGEKRKDVESESTH) is disordered. The span at 10 to 28 (GRNEVKMEGEKRKDVESES) shows a compositional bias: basic and acidic residues. Positions 31–108 (VTLNVKGQDE…IDALLPQESG (78 aa)) constitute a Ubiquitin-like domain. Gly-108 is covalently cross-linked (Glycyl lysine isopeptide (Gly-Lys) (interchain with K-? in acceptor proteins)).

This sequence belongs to the ubiquitin family. SUMO subfamily. As to quaternary structure, interacts with SAE2, SCE1, SIZ1 and MMS21 Covalently attached to a number of proteins.

It is found in the nucleus. Its subcellular location is the cytoplasm. In terms of biological role, ubiquitin-like protein which can be covalently attached to target lysines as a monomer. Does not seem to be involved in protein degradation and may function as an antagonist of ubiquitin in the degradation process. The chain is Putative small ubiquitin-related modifier 6 (SUMO6) from Arabidopsis thaliana (Mouse-ear cress).